The chain runs to 639 residues: Probable endo-1,3(4)-beta-glucanase ACLA_073210 (639 aa).

The signal sequence occupies residues 1–21; sequence MAPSSLLLSVGSLIASSLASA. The 265-residue stretch at 26–290 folds into the GH16 domain; the sequence is IREQSQSYQL…WAGNVFGESG (265 aa). N65 is a glycosylation site (N-linked (GlcNAc...) asparagine). The Nucleophile role is filled by E146. E151 (proton donor) is an active-site residue. 2 disordered regions span residues 337 to 384 and 442 to 545; these read TVAS…TVAE and QSSS…GSSI. The segment covering 339–348 has biased composition (polar residues); it reads ASPNTASEVH. Low complexity-rich tracts occupy residues 362–376 and 478–488; these read PTVP…VPPA and TTTEAVAETET. A lipid anchor (GPI-anchor amidated alanine) is attached at A617. A propeptide spans 618–639 (removed in mature form); the sequence is GARKLSVGLSGLVGALAVAALA.

It belongs to the glycosyl hydrolase 16 family.

Its subcellular location is the cell membrane. The catalysed reaction is Endohydrolysis of (1-&gt;3)- or (1-&gt;4)-linkages in beta-D-glucans when the glucose residue whose reducing group is involved in the linkage to be hydrolyzed is itself substituted at C-3.. Functionally, mixed-linked glucanase involved in the degradation of complex natural cellulosic substrates. In Aspergillus clavatus (strain ATCC 1007 / CBS 513.65 / DSM 816 / NCTC 3887 / NRRL 1 / QM 1276 / 107), this protein is Probable endo-1,3(4)-beta-glucanase ACLA_073210.